A 155-amino-acid chain; its full sequence is 6,7-dimethyl-8-ribityllumazine synthase (155 aa).

Residues Phe-23, 57 to 59, and 81 to 83 contribute to the 5-amino-6-(D-ribitylamino)uracil site; these read AFE and AVI. (2S)-2-hydroxy-3-oxobutyl phosphate is bound at residue 86-87; it reads ST. Catalysis depends on His-89, which acts as the Proton donor. Phe-114 is a 5-amino-6-(D-ribitylamino)uracil binding site. Residue Arg-128 coordinates (2S)-2-hydroxy-3-oxobutyl phosphate.

This sequence belongs to the DMRL synthase family.

The catalysed reaction is (2S)-2-hydroxy-3-oxobutyl phosphate + 5-amino-6-(D-ribitylamino)uracil = 6,7-dimethyl-8-(1-D-ribityl)lumazine + phosphate + 2 H2O + H(+). It functions in the pathway cofactor biosynthesis; riboflavin biosynthesis; riboflavin from 2-hydroxy-3-oxobutyl phosphate and 5-amino-6-(D-ribitylamino)uracil: step 1/2. Catalyzes the formation of 6,7-dimethyl-8-ribityllumazine by condensation of 5-amino-6-(D-ribitylamino)uracil with 3,4-dihydroxy-2-butanone 4-phosphate. This is the penultimate step in the biosynthesis of riboflavin. This Dehalococcoides mccartyi (strain ATCC BAA-2100 / JCM 16839 / KCTC 5957 / BAV1) protein is 6,7-dimethyl-8-ribityllumazine synthase.